The sequence spans 238 residues: MNKEEAKILIDFMEKIGYRFYEPELLYNALCHSSYAHEQKQRGRKDVESNERLEFLGDAVIDLLLAEYLYLEFPEASEGVMAKVKAAIASEEALAQIARDINLGRYMFLGRGEEVSSGRERDSLLADMLEAVVAAVYIDGGLTAVKKVFLSYFAKYAKEVVEGKIVFDYKTSLQEITQARYRKLPEYVLVNEKGPSHMKKFTVELRLSGKLIAVGEGPSIKEAEKEAARRAIEKLKGD.

Residues 9-141 (LIDFMEKIGY…VVAAVYIDGG (133 aa)) form the RNase III domain. Glu54 serves as a coordination point for Mg(2+). Residue Asp58 is part of the active site. Mg(2+) contacts are provided by Asp127 and Glu130. Residue Glu130 is part of the active site. Positions 168 to 237 (DYKTSLQEIT…ARRAIEKLKG (70 aa)) constitute a DRBM domain.

The protein belongs to the ribonuclease III family. Homodimer. Requires Mg(2+) as cofactor.

The protein resides in the cytoplasm. It catalyses the reaction Endonucleolytic cleavage to 5'-phosphomonoester.. Digests double-stranded RNA. Involved in the processing of primary rRNA transcript to yield the immediate precursors to the large and small rRNAs (23S and 16S). Processes some mRNAs, and tRNAs when they are encoded in the rRNA operon. Processes pre-crRNA and tracrRNA of type II CRISPR loci if present in the organism. The chain is Ribonuclease 3 from Pseudothermotoga lettingae (strain ATCC BAA-301 / DSM 14385 / NBRC 107922 / TMO) (Thermotoga lettingae).